The sequence spans 110 residues: Parvalbumin alpha (110 aa).

N-acetylserine is present on Ser-2. Phosphoserine occurs at positions 2, 8, and 24. EF-hand domains follow at residues 39–74 (KSAD…FSSD) and 78–110 (LSAK…VAES). 6 residues coordinate Ca(2+): Asp-52, Asp-54, Ser-56, Phe-58, Glu-60, and Glu-63. Position 66 is a phosphoserine (Ser-66). Ca(2+) is bound by residues Asp-91, Asp-93, Asp-95, Lys-97, and Glu-102.

In terms of biological role, in muscle, parvalbumin is thought to be involved in relaxation after contraction. It binds two calcium ions. The protein is Parvalbumin alpha (Pvalb) of Rattus norvegicus (Rat).